A 456-amino-acid polypeptide reads, in one-letter code: MSGFDRRSFLKASMVTAAATALAACASSERATGTTPKAAGKSVMGLVVPKMDEVRVGLIGVGERGIGFVHHFSRIEGARITAICDTDTLVLARAEKAINEYGRDKPAYFSKGDHAYRDLLNRDDVDIVVIATPWAWHHPMAKEAMLAGKHAFVEVPMAGTIEELWDLVDTAELTQRNCMMMENVCYGRDELMVLNMVRQGLFGELLHGEAAYIHELRWQMKEIDRKTGSWRTAYHAKYNGNLYPTHGLGPVAQYMNINRGDRLDYLTSVSSPSLGRAAYAKREFPADHQRNQLKYIGGDMNTSLIKTVKGRSIMVQHDTTTPRPYSRHNLIQGTNGVFAGFPNRIALENGGSGSYHEWDENMDSWYAKYDHPLWTRMGKEAEENGGHGGMDFLMCWRMIYCLRNGEALDQDVYDGAAWSAVFPLSVASVGDRGNSKDFPDFTRGVWQTAKPLGIVG.

The tat-type signal signal peptide spans 1 to 33 (MSGFDRRSFLKASMVTAAATALAACASSERATG). NAD(+)-binding positions include 63–64 (ER), Asp85, 134–137 (WAWH), 154–155 (EV), and Asn183. Substrate is bound by residues Tyr212, Arg231, 243 to 246 (YPTH), and Tyr325. Tyr243 contacts NAD(+).

The protein belongs to the Gfo/Idh/MocA family. Glycosyl hydrolase 109 subfamily. It depends on NAD(+) as a cofactor. Post-translationally, predicted to be exported by the Tat system. The position of the signal peptide cleavage has not been experimentally proven.

Glycosidase. The polypeptide is Glycosyl hydrolase family 109 protein 2 (Shewanella sp. (strain ANA-3)).